The sequence spans 447 residues: Na(+)-translocating NADH-quinone reductase subunit A (447 aa).

The protein belongs to the NqrA family. In terms of assembly, composed of six subunits; NqrA, NqrB, NqrC, NqrD, NqrE and NqrF.

It carries out the reaction a ubiquinone + n Na(+)(in) + NADH + H(+) = a ubiquinol + n Na(+)(out) + NAD(+). Functionally, NQR complex catalyzes the reduction of ubiquinone-1 to ubiquinol by two successive reactions, coupled with the transport of Na(+) ions from the cytoplasm to the periplasm. NqrA to NqrE are probably involved in the second step, the conversion of ubisemiquinone to ubiquinol. This chain is Na(+)-translocating NADH-quinone reductase subunit A, found in Saccharophagus degradans (strain 2-40 / ATCC 43961 / DSM 17024).